The chain runs to 150 residues: Large ribosomal subunit protein bL9 (150 aa).

Belongs to the bacterial ribosomal protein bL9 family.

Functionally, binds to the 23S rRNA. This chain is Large ribosomal subunit protein bL9, found in Streptococcus agalactiae serotype III (strain NEM316).